The following is a 204-amino-acid chain: UPF0637 protein SAB0972c (204 aa).

It belongs to the UPF0637 family.

The sequence is that of UPF0637 protein SAB0972c from Staphylococcus aureus (strain bovine RF122 / ET3-1).